A 350-amino-acid chain; its full sequence is Twinfilin-1 (350 aa).

Ser2 carries the N-acetylserine modification. Residues 2–139 (SHRTGIQASE…SLHGYKKYLL (138 aa)) form the ADF-H 1 domain. A phosphoserine mark is found at Ser143 and Ser277. The region spanning 175–313 (LQGVAFPISR…TADFLYEEVH (139 aa)) is the ADF-H 2 domain. Position 309 is a phosphotyrosine (Tyr309). The disordered stretch occupies residues 316–350 (QHAHKQSFAKPKGPAGKRGIRRLIRGPAETEATTD). Thr349 carries the post-translational modification Phosphothreonine.

It belongs to the actin-binding proteins ADF family. Twinfilin subfamily. In terms of assembly, interacts with G-actin; ADP-actin form and capping protein (CP). May also be able to interact with TWF2 and phosphoinositides, PI(4,5)P2. When bound to PI(4,5)P2, it is down-regulated. Interacts with ACTG1. In terms of processing, phosphorylated on serine and threonine residues.

It is found in the cytoplasm. Its subcellular location is the cytoskeleton. In terms of biological role, actin-binding protein involved in motile and morphological processes. Inhibits actin polymerization, likely by sequestering G-actin. By capping the barbed ends of filaments, it also regulates motility. Seems to play an important role in clathrin-mediated endocytosis and distribution of endocytic organelles. This chain is Twinfilin-1 (TWF1), found in Pongo abelii (Sumatran orangutan).